Reading from the N-terminus, the 186-residue chain is Glutathione S-transferase 1, isoform A (186 aa).

The region spanning 1–81 is the GST N-terminal domain; that stretch reads MDFYYLPGSA…YLVEKYCAHD (81 aa). Residues Ser-9, 50 to 52, and 65 to 67 contribute to the glutathione site; these read HCI and ESR. In terms of domain architecture, GST C-terminal spans 92–186; that stretch reads DPRRRAVVHQ…RRCRVRSAAI (95 aa).

The protein belongs to the GST superfamily. Theta family. Homodimer.

It carries out the reaction RX + glutathione = an S-substituted glutathione + a halide anion + H(+). Its function is as follows. Conjugation of reduced glutathione to a wide number of exogenous and endogenous hydrophobic electrophiles. In Anopheles gambiae (African malaria mosquito), this protein is Glutathione S-transferase 1, isoform A.